Reading from the N-terminus, the 396-residue chain is S-adenosylmethionine synthase 4 (396 aa).

Glu13 is a Mg(2+) binding site. His19 lines the ATP pocket. Glu47 lines the K(+) pocket. Residues Glu60 and Gln103 each coordinate L-methionine. Residues 171-173 (DGK), 239-242 (SGRF), Asp250, 256-257 (RK), Ala273, Lys277, and Lys281 each bind ATP. Asp250 contributes to the L-methionine binding site. Lys281 contacts L-methionine.

This sequence belongs to the AdoMet synthase family. In terms of assembly, homotetramer. Mn(2+) is required as a cofactor. The cofactor is Mg(2+). It depends on Co(2+) as a cofactor. K(+) serves as cofactor. As to expression, expressed in roots, stems and leaves (at protein level).

The protein localises to the cytoplasm. The catalysed reaction is L-methionine + ATP + H2O = S-adenosyl-L-methionine + phosphate + diphosphate. The protein operates within amino-acid biosynthesis; S-adenosyl-L-methionine biosynthesis; S-adenosyl-L-methionine from L-methionine: step 1/1. Its function is as follows. Catalyzes the formation of S-adenosylmethionine from methionine and ATP. The reaction comprises two steps that are both catalyzed by the same enzyme: formation of S-adenosylmethionine (AdoMet) and triphosphate, and subsequent hydrolysis of the triphosphate. May be involved in the synthesis of betain in response to abiotic stress such as high salinity. The sequence is that of S-adenosylmethionine synthase 4 (SAMS4) from Atriplex nummularia (Old man saltbush).